The sequence spans 466 residues: Clusterin-like protein 1 (466 aa).

A signal peptide spans 1–20 (MKPPLLVFIVCLLWLKDSHC). Residues 57-111 (KQMKIMMERKEKEHTNLMSTLKKCREEKQEALKLLNEVQEHLEEEERLCRESLAD) are a coiled coil. 5 disulfides stabilise this stretch: Cys105–Cys333, Cys116–Cys325, Cys119–Cys322, Cys124–Cys315, and Cys131–Cys305. N-linked (GlcNAc...) asparagine glycosylation is found at Asn196, Asn257, Asn311, Asn351, Asn412, and Asn431.

Belongs to the clusterin family.

It localises to the secreted. This chain is Clusterin-like protein 1 (CLUL1), found in Homo sapiens (Human).